Consider the following 192-residue polypeptide: dITP/XTP pyrophosphatase (192 aa).

Substrate is bound at residue 7-12 (SNNKNK). D68 (proton acceptor) is an active-site residue. D68 contacts Mg(2+). Substrate contacts are provided by residues T69, 148–151 (FGYD), K171, and 176–177 (HR).

The protein belongs to the HAM1 NTPase family. Homodimer. The cofactor is Mg(2+).

The enzyme catalyses XTP + H2O = XMP + diphosphate + H(+). The catalysed reaction is dITP + H2O = dIMP + diphosphate + H(+). It catalyses the reaction ITP + H2O = IMP + diphosphate + H(+). Functionally, pyrophosphatase that catalyzes the hydrolysis of nucleoside triphosphates to their monophosphate derivatives, with a high preference for the non-canonical purine nucleotides XTP (xanthosine triphosphate), dITP (deoxyinosine triphosphate) and ITP. Seems to function as a house-cleaning enzyme that removes non-canonical purine nucleotides from the nucleotide pool, thus preventing their incorporation into DNA/RNA and avoiding chromosomal lesions. The protein is dITP/XTP pyrophosphatase of Flavobacterium johnsoniae (strain ATCC 17061 / DSM 2064 / JCM 8514 / BCRC 14874 / CCUG 350202 / NBRC 14942 / NCIMB 11054 / UW101) (Cytophaga johnsonae).